We begin with the raw amino-acid sequence, 212 residues long: NADH dehydrogenase [ubiquinone] iron-sulfur protein 8, mitochondrial (212 aa).

Residues 1 to 36 constitute a mitochondrion transit peptide; it reads MRCLTMPMLLRALAQAQAARAGHASVRGLHSSAVAA. 4Fe-4S ferredoxin-type domains lie at 104–133 and 143–172; these read RRYP…IEAE and TRYD…EGPN. 8 residues coordinate [4Fe-4S] cluster: C113, C116, C119, C123, C152, C155, C158, and C162.

The protein belongs to the complex I 23 kDa subunit family. As to quaternary structure, core subunit of respiratory chain NADH dehydrogenase (Complex I) which is composed of 45 different subunits. This is a component of the iron-sulfur (IP) fragment of the enzyme. Interacts with RAB5IF. Requires [4Fe-4S] cluster as cofactor.

It localises to the mitochondrion inner membrane. The catalysed reaction is a ubiquinone + NADH + 5 H(+)(in) = a ubiquinol + NAD(+) + 4 H(+)(out). Functionally, core subunit of the mitochondrial membrane respiratory chain NADH dehydrogenase (Complex I) which catalyzes electron transfer from NADH through the respiratory chain, using ubiquinone as an electron acceptor. Essential for the catalytic activity and assembly of complex I. This chain is NADH dehydrogenase [ubiquinone] iron-sulfur protein 8, mitochondrial (NDUFS8), found in Bos taurus (Bovine).